The primary structure comprises 108 residues: Protein phosphatase 1 regulatory subunit 1C (108 aa).

The interval 25-108 (AEQIRKRRPT…ASEREEKWNH (84 aa)) is disordered. Residues 45–54 (NSPEIDEKRV) are compositionally biased toward basic and acidic residues. Positions 55–73 (TNTQESQNASPKQRKQSVY) are enriched in polar residues. Over residues 99-108 (ASEREEKWNH) the composition is skewed to basic and acidic residues.

This sequence belongs to the protein phosphatase inhibitor 1 family.

It is found in the cytoplasm. Its function is as follows. May increase cell susceptibility to TNF-induced apoptosis. This is Protein phosphatase 1 regulatory subunit 1C (Ppp1r1c) from Mus musculus (Mouse).